Reading from the N-terminus, the 99-residue chain is Protein S100-Z (99 aa).

EF-hand domains are found at residues 13 to 48 (ITVF…FLMS) and 50 to 85 (KDPM…LTVA). Residues S20, E23, D25, K28, E33, D63, N65, D67, E69, and E74 each contribute to the Ca(2+) site.

The protein belongs to the S-100 family. In terms of assembly, homodimer. Homodimers may assemble into larger stable oligomers. As to expression, in larva at 5 days post-fertilization, shows very restricted expression only in a few large cells of the olfactory placode. More widely expressed in the adult. Expressed at higher levels in gut than in spleen, head kidney and gill.

The chain is Protein S100-Z from Danio rerio (Zebrafish).